The primary structure comprises 413 residues: Exodeoxyribonuclease I (413 aa).

In terms of domain architecture, Exonuclease spans 12 to 193 (LFYDYETFGI…VSDVYATIEI (182 aa)). Mg(2+)-binding residues include Asp-15, Glu-17, and Asp-186. Glu-17 contributes to the substrate binding site. Positions 202-349 (PRLFDFFFKI…QNIKIIFSKN (148 aa)) constitute an ExoI SH3-like domain. An ExoI C-terminal domain is found at 350–413 (NNTNQFFNVD…RYRARNFFIH (64 aa)).

As to quaternary structure, monomer. Interacts with ssb (via C-terminus); this interaction stimulates the exonuclease activity by recruiting the enzyme to its substrate. It depends on Mg(2+) as a cofactor.

It catalyses the reaction Exonucleolytic cleavage in the 3'- to 5'-direction to yield nucleoside 5'-phosphates.. Its function is as follows. Degrades single-stranded DNA (ssDNA) in a highly processive manner. Also functions as a DNA deoxyribophosphodiesterase that releases deoxyribose-phosphate moieties following the cleavage of DNA at an apurinic/apyrimidinic (AP) site by either an AP endonuclease or AP lyase. The chain is Exodeoxyribonuclease I (sbcB) from Buchnera aphidicola subsp. Acyrthosiphon pisum (strain APS) (Acyrthosiphon pisum symbiotic bacterium).